Here is a 213-residue protein sequence, read N- to C-terminus: High frequency lysogenization protein HflD homolog (213 aa).

Residues 79–122 adopt a coiled-coil conformation; it reads QGLNAELTRYTLSLMVLERKLSSAKGALNTLGDRINGLQRQLDH.

Belongs to the HflD family.

The protein resides in the cytoplasm. It localises to the cell inner membrane. This chain is High frequency lysogenization protein HflD homolog, found in Salmonella agona (strain SL483).